The primary structure comprises 1018 residues: Transmembrane protein 132A (1018 aa).

An N-terminal signal peptide occupies residues 1–32 (MTERKAAAPRGPYGAWFCLLVALALEVVRVSS). Residues 33-846 (NHDTLDPIYL…VTDLELGMYA (814 aa)) lie on the Extracellular side of the membrane. Residue Asn276 is glycosylated (N-linked (GlcNAc...) asparagine). The tract at residues 606–911 (IEVRSPLSDA…QLDRCSSSGP (306 aa)) is binds to HSPA5/GRP78. Residues 666 to 1018 (LPAPKQEVAL…NYMERIRGSS (353 aa)) are confers cellular localization similar to full-length form. The segment covering 807 to 818 (ERAEEEAGKEEN) has biased composition (basic and acidic residues). The tract at residues 807–833 (ERAEEEAGKEENEAKEEEEDEEEMVPA) is disordered. Acidic residues predominate over residues 819–830 (EAKEEEEDEEEM). Residues 847 to 867 (LLGIFCLAILIFLVNGVVFVL) traverse the membrane as a helical segment. The Cytoplasmic portion of the chain corresponds to 868–1018 (RYQRKEPPDS…NYMERIRGSS (151 aa)). Positions 900–956 (SRQLDRCSSSGPPKGEGGCPCESGAGGDASTVAPSASESPAGSSSTLARKEAGGRRK) are disordered. Composition is skewed to low complexity over residues 906–922 (CSSS…PCES) and 932–944 (APSA…GSSS).

Belongs to the TMEM132 family. As to quaternary structure, interacts with HSPA5/GRP78.

Its subcellular location is the golgi apparatus membrane. The protein localises to the endoplasmic reticulum membrane. In terms of biological role, may play a role in embryonic and postnatal development of the brain. Increased resistance to cell death induced by serum starvation in cultured cells. Regulates cAMP-induced GFAP gene expression via STAT3 phosphorylation. In Mus musculus (Mouse), this protein is Transmembrane protein 132A (Tmem132a).